Reading from the N-terminus, the 250-residue chain is Proteasome subunit alpha type-4-2 (250 aa).

In terms of assembly, the 26S proteasome consists of a 20S proteasome core and two 19S regulatory subunits. The 20S proteasome core is composed of 28 subunits that are arranged in four stacked rings, resulting in a barrel-shaped structure. The two end rings are each formed by seven alpha subunits, and the two central rings are each formed by seven beta subunits. The catalytic chamber with the active sites is on the inside of the barrel.

The protein resides in the cytoplasm. The protein localises to the nucleus. The proteasome is a multicatalytic proteinase complex which is characterized by its ability to cleave peptides with Arg, Phe, Tyr, Leu, and Glu adjacent to the leaving group at neutral or slightly basic pH. The proteasome has an ATP-dependent proteolytic activity. This Oryza sativa subsp. indica (Rice) protein is Proteasome subunit alpha type-4-2.